A 188-amino-acid chain; its full sequence is Elongation factor P-like protein (188 aa).

It belongs to the elongation factor P family.

The protein is Elongation factor P-like protein of Xanthomonas axonopodis pv. citri (strain 306).